The primary structure comprises 112 residues: UPF0102 protein Cla_1413 (112 aa).

Belongs to the UPF0102 family.

In Campylobacter lari (strain RM2100 / D67 / ATCC BAA-1060), this protein is UPF0102 protein Cla_1413.